We begin with the raw amino-acid sequence, 319 residues long: Acetyl-coenzyme A carboxylase carboxyl transferase subunit alpha (319 aa).

In terms of domain architecture, CoA carboxyltransferase C-terminal spans 32–293 (NVDTEVRALE…KAVLLNELEA (262 aa)).

The protein belongs to the AccA family. In terms of assembly, acetyl-CoA carboxylase is a heterohexamer composed of biotin carboxyl carrier protein (AccB), biotin carboxylase (AccC) and two subunits each of ACCase subunit alpha (AccA) and ACCase subunit beta (AccD).

The protein resides in the cytoplasm. The catalysed reaction is N(6)-carboxybiotinyl-L-lysyl-[protein] + acetyl-CoA = N(6)-biotinyl-L-lysyl-[protein] + malonyl-CoA. The protein operates within lipid metabolism; malonyl-CoA biosynthesis; malonyl-CoA from acetyl-CoA: step 1/1. In terms of biological role, component of the acetyl coenzyme A carboxylase (ACC) complex. First, biotin carboxylase catalyzes the carboxylation of biotin on its carrier protein (BCCP) and then the CO(2) group is transferred by the carboxyltransferase to acetyl-CoA to form malonyl-CoA. The polypeptide is Acetyl-coenzyme A carboxylase carboxyl transferase subunit alpha (Xylella fastidiosa (strain M12)).